Here is a 456-residue protein sequence, read N- to C-terminus: Bifunctional protein GlmU (456 aa).

Positions 1–229 (MLNNAMSVVI…LSEVEGVNNR (229 aa)) are pyrophosphorylase. UDP-N-acetyl-alpha-D-glucosamine-binding positions include 11–14 (LAAG), Lys-25, Gln-76, 81–82 (GT), 103–105 (YGD), Gly-140, Glu-154, Asn-169, and Asn-227. Asp-105 is a binding site for Mg(2+). Residue Asn-227 coordinates Mg(2+). The linker stretch occupies residues 230–250 (LQLSRLERVYQSEQAEKLLLA). Residues 251 to 456 (GVMLRDPARF…EGWRRPVKKK (206 aa)) form an N-acetyltransferase region. UDP-N-acetyl-alpha-D-glucosamine contacts are provided by Arg-333 and Lys-351. Catalysis depends on His-363, which acts as the Proton acceptor. 2 residues coordinate UDP-N-acetyl-alpha-D-glucosamine: Tyr-366 and Asn-377. Acetyl-CoA contacts are provided by residues Ala-380, 386 to 387 (NY), Ser-405, Ala-423, and Arg-440.

The protein in the N-terminal section; belongs to the N-acetylglucosamine-1-phosphate uridyltransferase family. This sequence in the C-terminal section; belongs to the transferase hexapeptide repeat family. Homotrimer. The cofactor is Mg(2+).

It localises to the cytoplasm. It carries out the reaction alpha-D-glucosamine 1-phosphate + acetyl-CoA = N-acetyl-alpha-D-glucosamine 1-phosphate + CoA + H(+). It catalyses the reaction N-acetyl-alpha-D-glucosamine 1-phosphate + UTP + H(+) = UDP-N-acetyl-alpha-D-glucosamine + diphosphate. Its pathway is nucleotide-sugar biosynthesis; UDP-N-acetyl-alpha-D-glucosamine biosynthesis; N-acetyl-alpha-D-glucosamine 1-phosphate from alpha-D-glucosamine 6-phosphate (route II): step 2/2. It functions in the pathway nucleotide-sugar biosynthesis; UDP-N-acetyl-alpha-D-glucosamine biosynthesis; UDP-N-acetyl-alpha-D-glucosamine from N-acetyl-alpha-D-glucosamine 1-phosphate: step 1/1. The protein operates within bacterial outer membrane biogenesis; LPS lipid A biosynthesis. Its function is as follows. Catalyzes the last two sequential reactions in the de novo biosynthetic pathway for UDP-N-acetylglucosamine (UDP-GlcNAc). The C-terminal domain catalyzes the transfer of acetyl group from acetyl coenzyme A to glucosamine-1-phosphate (GlcN-1-P) to produce N-acetylglucosamine-1-phosphate (GlcNAc-1-P), which is converted into UDP-GlcNAc by the transfer of uridine 5-monophosphate (from uridine 5-triphosphate), a reaction catalyzed by the N-terminal domain. The protein is Bifunctional protein GlmU of Escherichia coli O6:K15:H31 (strain 536 / UPEC).